Here is a 355-residue protein sequence, read N- to C-terminus: Chemerin-like receptor 2 (355 aa).

Topologically, residues 1-41 (MEDLEETLFEEFENYSYALDYYSLESDLEEKVQLGVVHWVS) are extracellular. Asparagine 14 is a glycosylation site (N-linked (GlcNAc...) asparagine). A helical membrane pass occupies residues 42-62 (LVLYCLSFVLGIPGNAIVIWF). The Cytoplasmic segment spans residues 63-73 (TGFKWKRTVST). The helical transmembrane segment at 74-94 (LWFLNLAIADFIFLLFLPLYI) threads the bilayer. Topologically, residues 95–112 (SYVVMNFHWPFGIWLCKA) are extracellular. A disulfide bridge links cysteine 110 with cysteine 187. The helical transmembrane segment at 113-133 (NSFTAQLNMFASVFFLTVISL) threads the bilayer. The Cytoplasmic segment spans residues 134–154 (DHYIHLIHPVLSHRHRTLKNS). The helical transmembrane segment at 155–175 (LIVIIFIWLLASLIGGPALYF) threads the bilayer. Over 176 to 210 (RDTVEFNNHTLCYNNFQKHDPDLTVIRHHVLTWVK) the chain is Extracellular. Residues 211-231 (YIVGYLFPLLTMSICYLCLIL) form a helical membrane-spanning segment. Residues 232–247 (KVKKRSILISSRHFWT) are Cytoplasmic-facing. The helical transmembrane segment at 248–268 (ILAVVVAFVVCWTPYHLFSIW) threads the bilayer. Residues 269 to 286 (ELTIHHNSYSHHVMQAGI) lie on the Extracellular side of the membrane. Residues 287–307 (PLSTGLAFLNSCLNPILYVLI) traverse the membrane as a helical segment. Residues 308 to 355 (SKKFQARFRSSVAEILKYTLWEVSCSGTVSEQLRNSETKNLCLLETAQ) lie on the Cytoplasmic side of the membrane.

Belongs to the chemokine-like receptor (CMKLR) family.

It localises to the cell membrane. Its function is as follows. Receptor for chemoattractant adipokine chemerin/RARRES2 suggesting a role for this receptor in the regulation of inflammation and energy homesotasis. Signals mainly via beta-arrestin pathway. Binding of RARRES2 activates weakly G proteins, calcium mobilization and MAPK1/MAPK3 (ERK1/2) phosphorylation too. Acts also as a receptor for TAFA1, mediates its effects on neuronal stem-cell proliferation and differentiation via the activation of ROCK/ERK and ROCK/STAT3 signaling pathway. The protein is Chemerin-like receptor 2 (CMKLR2) of Macaca fascicularis (Crab-eating macaque).